The chain runs to 293 residues: Small ribosomal subunit biogenesis GTPase RsgA (293 aa).

Residues 63-223 (QNELVRPPVA…VADTPGFSAL (161 aa)) enclose the CP-type G domain. GTP contacts are provided by residues 112 to 115 (SKID) and 166 to 174 (GQSGVGKSS). Zn(2+) is bound by residues C247, C252, H254, and C260.

This sequence belongs to the TRAFAC class YlqF/YawG GTPase family. RsgA subfamily. As to quaternary structure, monomer. Associates with 30S ribosomal subunit, binds 16S rRNA. It depends on Zn(2+) as a cofactor.

It is found in the cytoplasm. Its function is as follows. One of several proteins that assist in the late maturation steps of the functional core of the 30S ribosomal subunit. Helps release RbfA from mature subunits. May play a role in the assembly of ribosomal proteins into the subunit. Circularly permuted GTPase that catalyzes slow GTP hydrolysis, GTPase activity is stimulated by the 30S ribosomal subunit. In Geobacillus thermodenitrificans (strain NG80-2), this protein is Small ribosomal subunit biogenesis GTPase RsgA.